Consider the following 427-residue polypeptide: Glucose-1-phosphate adenylyltransferase (427 aa).

Residues Tyr-112, Gly-177, 192–193 (EK), and Ser-210 contribute to the alpha-D-glucose 1-phosphate site.

This sequence belongs to the bacterial/plant glucose-1-phosphate adenylyltransferase family. As to quaternary structure, homotetramer.

It carries out the reaction alpha-D-glucose 1-phosphate + ATP + H(+) = ADP-alpha-D-glucose + diphosphate. It participates in glycan biosynthesis; glycogen biosynthesis. Its function is as follows. Involved in the biosynthesis of ADP-glucose, a building block required for the elongation reactions to produce glycogen. Catalyzes the reaction between ATP and alpha-D-glucose 1-phosphate (G1P) to produce pyrophosphate and ADP-Glc. The protein is Glucose-1-phosphate adenylyltransferase of Methylobacillus flagellatus (strain ATCC 51484 / DSM 6875 / VKM B-1610 / KT).